Reading from the N-terminus, the 238-residue chain is Urease accessory protein UreG (238 aa).

Residues 1–15 (MPPHLIDGEPHDHAH) show a composition bias toward basic and acidic residues. Residues 1–27 (MPPHLIDGEPHDHAHDRPKRQRTPGEP) form a disordered region. 34-41 (GPVGSGKT) is a binding site for GTP.

Belongs to the SIMIBI class G3E GTPase family. UreG subfamily. Homodimer. UreD, UreF and UreG form a complex that acts as a GTP-hydrolysis-dependent molecular chaperone, activating the urease apoprotein by helping to assemble the nickel containing metallocenter of UreC. The UreE protein probably delivers the nickel.

It localises to the cytoplasm. Facilitates the functional incorporation of the urease nickel metallocenter. This process requires GTP hydrolysis, probably effectuated by UreG. The protein is Urease accessory protein UreG of Nocardia farcinica (strain IFM 10152).